The primary structure comprises 144 residues: Putative sugar phosphate isomerase RT0290 (144 aa).

Position 12 (H12) interacts with substrate. H101 functions as the Proton donor in the catalytic mechanism. Position 135 (R135) interacts with substrate.

It belongs to the LacAB/RpiB family.

The sequence is that of Putative sugar phosphate isomerase RT0290 from Rickettsia typhi (strain ATCC VR-144 / Wilmington).